Consider the following 823-residue polypeptide: Axial budding pattern protein 2 (823 aa).

A signal peptide spans 1-22; sequence MTQLQISLLLTATISLLHLVVA. The Extracellular segment spans residues 23–508; the sequence is TPYEAYPIGK…SHNKKAVAIA (486 aa). N-linked (GlcNAc...) asparagine glycans are attached at residues Asn-41, Asn-50, Asn-96, Asn-117, Asn-163, Asn-260, Asn-266, Asn-304, Asn-324, Asn-359, Asn-382, Asn-389, Asn-403, Asn-447, Asn-451, and Asn-495. The interval 447–467 is disordered; the sequence is NHSANATSTRSSHHSTSTSSY. The segment covering 449–467 has biased composition (low complexity); the sequence is SANATSTRSSHHSTSTSSY. A helical transmembrane segment spans residues 509–529; the sequence is CGVAIPLGVILVALICFLIFW. Residues 530-823 are Cytoplasmic-facing; the sequence is RRRRENPDDE…DIHGRIPEML (294 aa). Disordered regions lie at residues 539–576 and 596–627; these read ENLP…ASSY and HSAT…QSQS. Composition is skewed to polar residues over residues 552 to 566 and 614 to 626; these read NPAN…TPLN and SGMN…FQSQ. Phosphoserine occurs at positions 642, 673, and 676. Disordered stretches follow at residues 700–734 and 751–771; these read PEKE…VTPS and DSQS…SSDD. The segment covering 709–724 has biased composition (polar residues); that stretch reads DVTMSSLDPWNSNISP. The span at 760-769 shows a compositional bias: low complexity; that stretch reads TPTTMSTSSS.

Interacts with BEM1, BUD3, BUD4, BUD5, CDC24 and CDC42. Post-translationally, O-glycosylated by PMT4 and N-glycosylated. O-glycosylation increases activity in daughter cells by enhancing stability and promoting localization to the plasma membrane. May also be O-glycosylated by PMT1 and PMT2.

It localises to the cell membrane. Its function is as follows. Required for haploid cells axial budding pattern. Acts as an anchor to help direct new growth components and/or polarity establishment components like the BUD5 GTP/GDP exchange factor to localize at the cortical axial budding site. Regulates septin organization in late G1 independently of its role in polarity-axis determination. In Saccharomyces cerevisiae (strain ATCC 204508 / S288c) (Baker's yeast), this protein is Axial budding pattern protein 2 (AXL2).